Consider the following 444-residue polypeptide: Nuclear envelope integral membrane protein 1 (444 aa).

The N-terminal stretch at 1-43 is a signal peptide; it reads MAGGMKVAVSPAVGPGPWGSGVGGGGTVRLLLILSGCLVYGTA. N125 carries an N-linked (GlcNAc...) asparagine glycan. Transmembrane regions (helical) follow at residues 161–181, 186–206, 216–236, 245–265, and 289–309; these read PKLF…DLLS, FYYS…IIFI, PIYV…QLVF, CYWQ…FAVC, and LCFM…IIIA. The segment at 186–297 is a; required for its colocalization with lamins at the nuclear envelope; sequence FYYSTGMTVG…GLCFMYSGIQ (112 aa). A b; required for interaction with RAN-GTP region spans residues 336 to 405; sequence PVPPRLLTEE…LTPNEVSVHE (70 aa). A required for nuclear localization region spans residues 336-444; sequence PVPPRLLTEE…PAITQNNFLT (109 aa). 3 positions are modified to phosphoserine: S368, S424, and S425.

Belongs to the NEMP family. In terms of assembly, homooligomer. Interacts with RAN-GTP. Interacts with EMD. Post-translationally, phosphorylation may regulate its interaction with RAN-GTP.

The protein resides in the nucleus inner membrane. It localises to the nucleus envelope. Functionally, together with EMD, contributes to nuclear envelope stiffness in germ cells. Required for female fertility. Essential for normal erythropoiesis. Required for efficient nuclear envelope opening and enucleation during the late stages of erythroblast maturation. The protein is Nuclear envelope integral membrane protein 1 (NEMP1) of Homo sapiens (Human).